The sequence spans 400 residues: MSDKLVLVLNCGSSSLKFAIIDAQSGDDKVSGLAECFGLEDSRIKWKFDGGKNEAKLGAFTAHREAVEFIVNNILAEHPELAAQIKAVGHRIVHGGEKFTRSVIVTPEVIQGIEDCASLAPLHNPAHLIGIRAALASFPALPQVAVFDTAFHQTMPEKAYIYALPYKLYREHSIRRYGMHGTSNIYICREAAKVLGKETKDTNIICAHLGNGASVTAIKDGKSVDTSMGLTPLEGLVMGTRCGDLDPSIIFHLVKQLGYTLDEVNNLLNKQSGLLGISELTNDCRGIEEGYQDGHKGATLALDIFCYRLAKYIASYTVPLGRLDAIIFTGGIGENSDLIREKVLNLLAIFNFKVDDNLNKAARFGQQGIITQVGSPIAMVIPTNEEWVIAEDAIKLITAK.

Asn10 provides a ligand contact to Mg(2+). Lys17 lines the ATP pocket. Residue Arg91 participates in substrate binding. The active-site Proton donor/acceptor is the Asp148. Residues 208–212 (HLGNG), 283–285 (DCR), and 331–335 (GIGEN) each bind ATP. Residue Glu385 coordinates Mg(2+).

Belongs to the acetokinase family. Homodimer. The cofactor is Mg(2+). It depends on Mn(2+) as a cofactor.

The protein localises to the cytoplasm. It carries out the reaction acetate + ATP = acetyl phosphate + ADP. It functions in the pathway metabolic intermediate biosynthesis; acetyl-CoA biosynthesis; acetyl-CoA from acetate: step 1/2. Functionally, catalyzes the formation of acetyl phosphate from acetate and ATP. Can also catalyze the reverse reaction. The sequence is that of Acetate kinase from Shewanella frigidimarina (strain NCIMB 400).